The following is a 207-amino-acid chain: Porin MspD (207 aa).

An N-terminal signal peptide occupies residues 1–24 (MRYLVMMFALLVSVTLVSPRPANA).

Belongs to the mycobacterial porin (TC 1.B.24) family. In terms of assembly, octamers. Probably forms a goblet with the wide end on the exterior of the outer membrane and a central channel. It is not known if mixed oligomers of MspD with other Msp subunits form in vivo.

Its subcellular location is the cell outer membrane. It localises to the secreted. The protein resides in the cell wall. Functionally, a backup porin induced when MspA, the major porin, is deleted. It probably forms a water-filled channel which favors the permeation of cations. There are about 2400 porins in wild-type, 800 in an mspA deletion and 150 in a double mspA-mspC deletion. In Mycolicibacterium smegmatis (strain ATCC 700084 / mc(2)155) (Mycobacterium smegmatis), this protein is Porin MspD (mspD).